The chain runs to 309 residues: MEPRKNVTDFVLLGFTQNPKEQKVLFVMFLLFYILTMVGNLLIVVTVTVSETLGSPMYFFLAGLSFIDIIYSSSISPRLISGLFFGNNSISFQSCMAQLFIEHIFGGSEVFLLLVMAYDCYVAICKPLHYLVIMRQWVCVVLLVVSWVGGFLHSVFQLSIIYGLPFCGPNVIDHFFCDMYPLLKLVCTDTHAIGLLVVANGGLACTIVFLLLLISYGVILHSLKNLSQKGRQKALSTCSSHMTVVVFFFVPCIFMYARPARTFPIDKSVSVFYTVITPMLNPLIYTLRNSEMTSAMKKLWRRDLISSST.

Residues 1–23 (MEPRKNVTDFVLLGFTQNPKEQK) lie on the Extracellular side of the membrane. N-linked (GlcNAc...) asparagine glycosylation is present at Asn-6. The helical transmembrane segment at 24–47 (VLFVMFLLFYILTMVGNLLIVVTV) threads the bilayer. Residues 48–55 (TVSETLGS) lie on the Cytoplasmic side of the membrane. A helical membrane pass occupies residues 56 to 77 (PMYFFLAGLSFIDIIYSSSISP). Residues 78–98 (RLISGLFFGNNSISFQSCMAQ) lie on the Extracellular side of the membrane. The N-linked (GlcNAc...) asparagine glycan is linked to Asn-87. The cysteines at positions 95 and 187 are disulfide-linked. The chain crosses the membrane as a helical span at residues 99–118 (LFIEHIFGGSEVFLLLVMAY). Residues 119-137 (DCYVAICKPLHYLVIMRQW) lie on the Cytoplasmic side of the membrane. The chain crosses the membrane as a helical span at residues 138 to 156 (VCVVLLVVSWVGGFLHSVF). At 157-193 (QLSIIYGLPFCGPNVIDHFFCDMYPLLKLVCTDTHAI) the chain is on the extracellular side. A helical transmembrane segment spans residues 194-217 (GLLVVANGGLACTIVFLLLLISYG). The Cytoplasmic segment spans residues 218–233 (VILHSLKNLSQKGRQK). Residues 234–256 (ALSTCSSHMTVVVFFFVPCIFMY) traverse the membrane as a helical segment. Residues 257-267 (ARPARTFPIDK) are Extracellular-facing. The helical transmembrane segment at 268 to 287 (SVSVFYTVITPMLNPLIYTL) threads the bilayer. Topologically, residues 288–309 (RNSEMTSAMKKLWRRDLISSST) are cytoplasmic.

The protein belongs to the G-protein coupled receptor 1 family.

It is found in the cell membrane. Its function is as follows. Odorant receptor. The polypeptide is Olfactory receptor 4A47 (OR4A47) (Homo sapiens (Human)).